A 594-amino-acid polypeptide reads, in one-letter code: MGKLGKKARKFAKKNLQSVEKRSRKLKPFIKKKFAKRNERHQAGDKQEKKVEQQPKKRCQEEEFQDIAIDAVFGKDDDEVLRDGDSDSDGYLDELVNETDSDIMKCKVLSRSFLATCCDMVDKEQYVPALVRLLNWYRAACQYGHEPSGIARPNIYYDIEDSETFAKVIIFVLQKADHTFRSILGLSDSSTKEKILKLKNNPKWDSLKPLVKSFFRSTLHLVKQAGDLEIISFTLTQLRVSIVFLAAFPDLLKKLIKISVHLWVTGEETISQQAFLILKDISMVFNSECFDSCLINMYKAFLHDCDIPKANSEQRPFLRDSLVELCSQDVQKSYTKASVSITQLAKLLKMALATKNKEAVEKIHSGEYINCVDLWVNFISANVQDCDLQPLLYTIVQVINGVAQLIIGPRYLLLRVKCIHWLNHLSRTSGIFIPIASLVLDMLEYKTTNDGEKQEQKLEAVSTVKLPKNWLKSQNFQEQCIFSVIELLAVHFAQWSFHISFPDLATIPVMRLKKFHERSTMEGLKRVVKRFIEQVESNIEFVQRKRDDVTFSPNDQQSADTFMQLEKQNANAPYTQYYQSIIDKALGTNKKKKK.

Basic residues predominate over residues 1-13 (MGKLGKKARKFAK). Disordered regions lie at residues 1–21 (MGKLGKKARKFAKKNLQSVEK) and 35–58 (AKRNERHQAGDKQEKKVEQQPKKR). Short sequence motifs (nuclear localization signal) lie at residues 8–15 (ARKFAKKN), 35–42 (AKRNERHQ), and 512–519 (LKKFHERS). The segment covering 36–58 (KRNERHQAGDKQEKKVEQQPKKR) has biased composition (basic and acidic residues).

It belongs to the NOC2 family. In terms of assembly, interacts with SWA2, NOC2 and NOC3 in both the nucleolus and nucleoplasm. Binds to ENAP1 and OBE1. As to expression, expressed at low levels in roots, shoots, leaves, stems, inflorescences, flowers and siliques, with highest levels dividing tissues.

The protein localises to the nucleus. The protein resides in the nucleolus. It localises to the nucleoplasm. Collaboratively with CYP40/SQN and ULT1, influences floral meristem (FM) determinacy in an AGAMOUS and SUPERMAN-dependent manner, thus contributing to the floral developmental homeostasis. In Arabidopsis thaliana (Mouse-ear cress), this protein is Protein REBELOTE.